A 236-amino-acid chain; its full sequence is Probable transmembrane ascorbate ferrireductase 4 (236 aa).

The region spanning Phe-14 to Ile-210 is the Cytochrome b561 domain. The next 3 membrane-spanning stretches (helical) occupy residues Leu-17–Gly-37, Thr-42–Ile-62, and Val-76–Phe-96. Residues His-44, His-77, and His-110 each contribute to the heme b site. 3 consecutive transmembrane segments (helical) span residues Trp-112 to Phe-132, Thr-144 to Ala-164, and Val-191 to Leu-211. His-149 serves as a coordination point for heme b.

In terms of assembly, homodimer. Heme b serves as cofactor.

It is found in the membrane. The catalysed reaction is Fe(3+)(out) + L-ascorbate(in) = monodehydro-L-ascorbate radical(in) + Fe(2+)(out) + H(+). Its function is as follows. Two-heme-containing cytochrome. May catalyze ascorbate-dependent trans-membrane ferric-chelate reduction. This chain is Probable transmembrane ascorbate ferrireductase 4 (CYB561D), found in Arabidopsis thaliana (Mouse-ear cress).